Reading from the N-terminus, the 151-residue chain is Nucleoside diphosphate kinase (151 aa).

The ATP site is built by Lys11, Phe59, Arg87, Arg104, and Asn114. His117 acts as the Pros-phosphohistidine intermediate in catalysis.

It belongs to the NDK family. Homotrimer. It depends on Mg(2+) as a cofactor.

The catalysed reaction is a 2'-deoxyribonucleoside 5'-diphosphate + ATP = a 2'-deoxyribonucleoside 5'-triphosphate + ADP. It catalyses the reaction a ribonucleoside 5'-diphosphate + ATP = a ribonucleoside 5'-triphosphate + ADP. Functionally, major role in the synthesis of nucleoside triphosphates other than ATP. The ATP gamma phosphate is transferred to the NDP beta phosphate via a ping-pong mechanism, using a phosphorylated active-site intermediate. The polypeptide is Nucleoside diphosphate kinase (ndk1) (Schizosaccharomyces pombe (strain 972 / ATCC 24843) (Fission yeast)).